Consider the following 286-residue polypeptide: Apoptosis inhibitor 1 (286 aa).

2 BIR repeats span residues 29–96 and 131–199; these read LIER…CAYA and LQSR…CYFV. Zn(2+) contacts are provided by cysteine 169, cysteine 172, histidine 189, and cysteine 196. The segment at 238 to 274 adopts an RING-type zinc-finger fold; that stretch reads CKVCLERQRDAVLMPCRHFCVCVQCYFGLDQKCPTCR.

Acts by blocking cellular apoptosis early in infection. Later, stimulates caspase-3-like protease activity and induces apoptosis, probably to favor the release of occluded virions. This chain is Apoptosis inhibitor 1 (IAP1), found in Lepidoptera (butterflies and moths).